Here is a 62-residue protein sequence, read N- to C-terminus: Alpha-toxin Tf4 (62 aa).

An LCN-type CS-alpha/beta domain is found at 2–62 (KEGYPADSKG…SVWDSATNKC (61 aa)). 4 cysteine pairs are disulfide-bonded: C12-C62, C16-C38, C24-C43, and C28-C45. C62 carries the post-translational modification Cysteine amide.

As to expression, expressed by the venom gland.

The protein localises to the secreted. Its function is as follows. Alpha toxins bind voltage-independently at site-3 of sodium channels (Nav) and inhibit the inactivation of the activated channels, thereby blocking neuronal transmission. This toxin is toxic to frogs but non-toxic to insect larvae (T.molitor), mammals (rats) and crustaceans (crabs) at the doses assayed. The sequence is that of Alpha-toxin Tf4 from Tityus fasciolatus (Central Brazilian scorpion).